Consider the following 107-residue polypeptide: Small ribosomal subunit protein uS15 (107 aa).

Lysine 27 bears the N6-acetyllysine; alternate mark. Lysine 27 is subject to N6-succinyllysine; alternate. Lysine 27 is covalently cross-linked (Glycyl lysine isopeptide (Lys-Gly) (interchain with G-Cter in ubiquitin)). Serine 30 bears the Phosphoserine mark. N6-succinyllysine is present on lysine 34. Tyrosine 38 carries the post-translational modification Phosphotyrosine. Lysine 43 participates in a covalent cross-link: Glycyl lysine isopeptide (Lys-Gly) (interchain with G-Cter in SUMO2).

This sequence belongs to the universal ribosomal protein uS15 family. In terms of assembly, component of the small ribosomal subunit. Part of the small subunit (SSU) processome, composed of more than 70 proteins and the RNA chaperone small nucleolar RNA (snoRNA) U3. In terms of processing, ubiquitinated at Lys-27 by RNF14 and RNF25 in response to ribosome collisions (ribosome stalling).

The protein resides in the cytoplasm. The protein localises to the nucleus. It localises to the nucleolus. Component of the small ribosomal subunit. The ribosome is a large ribonucleoprotein complex responsible for the synthesis of proteins in the cell. Part of the small subunit (SSU) processome, first precursor of the small eukaryotic ribosomal subunit. During the assembly of the SSU processome in the nucleolus, many ribosome biogenesis factors, an RNA chaperone and ribosomal proteins associate with the nascent pre-rRNA and work in concert to generate RNA folding, modifications, rearrangements and cleavage as well as targeted degradation of pre-ribosomal RNA by the RNA exosome. The polypeptide is Small ribosomal subunit protein uS15 (RPS13) (Sus scrofa (Pig)).